A 498-amino-acid chain; its full sequence is Protein nucleotidyltransferase YdiU (498 aa).

ATP contacts are provided by Gly88, Gly90, Arg91, Lys111, Asp123, Gly124, Arg174, and Arg181. Catalysis depends on Asp250, which acts as the Proton acceptor. Mg(2+)-binding residues include Asn251 and Asp260. ATP is bound at residue Asp260.

It belongs to the SELO family. Mg(2+) is required as a cofactor. Mn(2+) serves as cofactor.

The catalysed reaction is L-seryl-[protein] + ATP = 3-O-(5'-adenylyl)-L-seryl-[protein] + diphosphate. The enzyme catalyses L-threonyl-[protein] + ATP = 3-O-(5'-adenylyl)-L-threonyl-[protein] + diphosphate. It carries out the reaction L-tyrosyl-[protein] + ATP = O-(5'-adenylyl)-L-tyrosyl-[protein] + diphosphate. It catalyses the reaction L-histidyl-[protein] + UTP = N(tele)-(5'-uridylyl)-L-histidyl-[protein] + diphosphate. The catalysed reaction is L-seryl-[protein] + UTP = O-(5'-uridylyl)-L-seryl-[protein] + diphosphate. The enzyme catalyses L-tyrosyl-[protein] + UTP = O-(5'-uridylyl)-L-tyrosyl-[protein] + diphosphate. Its function is as follows. Nucleotidyltransferase involved in the post-translational modification of proteins. It can catalyze the addition of adenosine monophosphate (AMP) or uridine monophosphate (UMP) to a protein, resulting in modifications known as AMPylation and UMPylation. This Methylorubrum populi (strain ATCC BAA-705 / NCIMB 13946 / BJ001) (Methylobacterium populi) protein is Protein nucleotidyltransferase YdiU.